A 532-amino-acid polypeptide reads, in one-letter code: Intercellular adhesion molecule 1 (532 aa).

An N-terminal signal peptide occupies residues 1–27 (MAPSSPRPALPALLVLLGALFPGPGNA). Residues 28 to 480 (QTSVSPPKVI…TVNVLSPRYE (453 aa)) are Extracellular-facing. 2 Ig-like C2-type domains span residues 41–103 (GGSV…QSTA) and 128–193 (GKDL…LDLR). Intrachain disulfides connect Cys-48–Cys-92, Cys-52–Cys-96, and Cys-135–Cys-186. An N-linked (GlcNAc...) asparagine glycan is attached at Asn-145. Positions 152-154 (RGE) match the Cell attachment site; atypical motif. N-linked (GlcNAc...) asparagine glycosylation is found at Asn-183, Asn-202, Asn-267, and Asn-296. Ig-like C2-type domains lie at 230–297 (DTQG…LGNQ) and 325–378 (GTEV…LEVA). A disulfide bridge links Cys-237 with Cys-290. Cys-332 and Cys-371 form a disulfide bridge. Residues Asn-385 and Asn-406 are each glycosylated (N-linked (GlcNAc...) asparagine). 3 disulfide bridges follow: Cys-403–Cys-419, Cys-419–Cys-457, and Cys-431–Cys-457. In terms of domain architecture, Ig-like C2-type 5 spans 412 to 464 (NSQQTPMCQASGNPLPELKCLKDGTFPLPVGESVTVTRDLEGTYLCRARSTQG). A helical membrane pass occupies residues 481–503 (IVIITVVAAAVIMGTAGLSTYLY). The Cytoplasmic segment spans residues 504–532 (NRQRKIRKYRLQQAQKGTPMKPNTQATPP). Phosphothreonine occurs at positions 521 and 530.

Belongs to the immunoglobulin superfamily. ICAM family. As to quaternary structure, homodimer. Interacts with MUC1 and promotes cell aggregation in epithelial cells. Interacts with ARHGEF26/SGEF. Interacts (on T cell side) with CD81, CD247 and CD9 at immunological synapses between antigen-presenting cells and T cells. In terms of processing, monoubiquitinated, which is promoted by MARCH9 and leads to endocytosis.

Its subcellular location is the membrane. In terms of biological role, ICAM proteins are ligands for the leukocyte adhesion protein LFA-1 (integrin alpha-L/beta-2). During leukocyte trans-endothelial migration, ICAM1 engagement promotes the assembly of endothelial apical cups through ARHGEF26/SGEF and RHOG activation. The chain is Intercellular adhesion molecule 1 (ICAM1) from Pan troglodytes (Chimpanzee).